A 476-amino-acid polypeptide reads, in one-letter code: Bifunctional protein HldE (476 aa).

Residues 1-319 (MKISLPAFEK…EALSLSHGES (319 aa)) are ribokinase. ATP is bound at residue 195 to 198 (NMSE). The active site involves Asp-264. Residues 345–476 (MTNGCFDILH…AIIQNIMANQ (132 aa)) are cytidylyltransferase.

It in the N-terminal section; belongs to the carbohydrate kinase PfkB family. In the C-terminal section; belongs to the cytidylyltransferase family. As to quaternary structure, homodimer.

The enzyme catalyses D-glycero-beta-D-manno-heptose 7-phosphate + ATP = D-glycero-beta-D-manno-heptose 1,7-bisphosphate + ADP + H(+). It carries out the reaction D-glycero-beta-D-manno-heptose 1-phosphate + ATP + H(+) = ADP-D-glycero-beta-D-manno-heptose + diphosphate. It participates in nucleotide-sugar biosynthesis; ADP-L-glycero-beta-D-manno-heptose biosynthesis; ADP-L-glycero-beta-D-manno-heptose from D-glycero-beta-D-manno-heptose 7-phosphate: step 1/4. Its pathway is nucleotide-sugar biosynthesis; ADP-L-glycero-beta-D-manno-heptose biosynthesis; ADP-L-glycero-beta-D-manno-heptose from D-glycero-beta-D-manno-heptose 7-phosphate: step 3/4. Functionally, catalyzes the phosphorylation of D-glycero-D-manno-heptose 7-phosphate at the C-1 position to selectively form D-glycero-beta-D-manno-heptose-1,7-bisphosphate. In terms of biological role, catalyzes the ADP transfer from ATP to D-glycero-beta-D-manno-heptose 1-phosphate, yielding ADP-D-glycero-beta-D-manno-heptose. This chain is Bifunctional protein HldE, found in Shewanella pealeana (strain ATCC 700345 / ANG-SQ1).